A 98-amino-acid chain; its full sequence is Large ribosomal subunit protein bL27 (98 aa).

Residues Met1–Phe9 constitute a propeptide that is removed on maturation.

Belongs to the bacterial ribosomal protein bL27 family. The N-terminus is cleaved by ribosomal processing cysteine protease Prp.

In Desulfitobacterium hafniense (strain DSM 10664 / DCB-2), this protein is Large ribosomal subunit protein bL27.